Consider the following 510-residue polypeptide: L-2,4-diaminobutyrate decarboxylase (510 aa).

Lys-319 is modified (N6-(pyridoxal phosphate)lysine).

It belongs to the group II decarboxylase family. Requires pyridoxal 5'-phosphate as cofactor.

The catalysed reaction is L-2,4-diaminobutanoate + H(+) = propane-1,3-diamine + CO2. Its pathway is amine and polyamine biosynthesis; 1,3-diaminopropane biosynthesis; 1,3-diaminopropane from L-aspartate 4-semialdehyde: step 2/2. The protein is L-2,4-diaminobutyrate decarboxylase (ddc) of Acinetobacter baumannii.